We begin with the raw amino-acid sequence, 488 residues long: Lysine--tRNA ligase (488 aa).

The Mg(2+) site is built by E397 and E404.

Belongs to the class-II aminoacyl-tRNA synthetase family. In terms of assembly, homodimer. It depends on Mg(2+) as a cofactor.

The protein localises to the cytoplasm. It catalyses the reaction tRNA(Lys) + L-lysine + ATP = L-lysyl-tRNA(Lys) + AMP + diphosphate. The protein is Lysine--tRNA ligase (lysS) of Mycoplasmopsis fermentans (strain ATCC 19989 / NBRC 14854 / NCTC 10117 / PG18) (Mycoplasma fermentans).